Consider the following 340-residue polypeptide: 7,8-didemethyl-8-hydroxy-5-deazariboflavin synthase (340 aa).

Residues 25-256 (ATYSPAYTIV…SDITIQIPPN (232 aa)) enclose the Radical SAM core domain. The [4Fe-4S] cluster site is built by cysteine 39, cysteine 43, and cysteine 46.

Belongs to the radical SAM superfamily. CofG family. Consists of two subunits, CofG and CofH. Requires [4Fe-4S] cluster as cofactor.

It catalyses the reaction 5-amino-5-(4-hydroxybenzyl)-6-(D-ribitylimino)-5,6-dihydrouracil + S-adenosyl-L-methionine = 7,8-didemethyl-8-hydroxy-5-deazariboflavin + 5'-deoxyadenosine + L-methionine + NH4(+) + H(+). The protein operates within cofactor biosynthesis; coenzyme F0 biosynthesis. Functionally, catalyzes the radical-mediated synthesis of 7,8-didemethyl-8-hydroxy-5-deazariboflavin from 5-amino-5-(4-hydroxybenzyl)-6-(D-ribitylimino)-5,6-dihydrouracil. The polypeptide is 7,8-didemethyl-8-hydroxy-5-deazariboflavin synthase (Trichormus variabilis (strain ATCC 29413 / PCC 7937) (Anabaena variabilis)).